A 103-amino-acid chain; its full sequence is Pyrimidine/purine nucleoside phosphorylase (103 aa).

It belongs to the nucleoside phosphorylase PpnP family.

The enzyme catalyses a purine D-ribonucleoside + phosphate = a purine nucleobase + alpha-D-ribose 1-phosphate. The catalysed reaction is adenosine + phosphate = alpha-D-ribose 1-phosphate + adenine. It catalyses the reaction cytidine + phosphate = cytosine + alpha-D-ribose 1-phosphate. It carries out the reaction guanosine + phosphate = alpha-D-ribose 1-phosphate + guanine. The enzyme catalyses inosine + phosphate = alpha-D-ribose 1-phosphate + hypoxanthine. The catalysed reaction is thymidine + phosphate = 2-deoxy-alpha-D-ribose 1-phosphate + thymine. It catalyses the reaction uridine + phosphate = alpha-D-ribose 1-phosphate + uracil. It carries out the reaction xanthosine + phosphate = alpha-D-ribose 1-phosphate + xanthine. Catalyzes the phosphorolysis of diverse nucleosides, yielding D-ribose 1-phosphate and the respective free bases. Can use uridine, adenosine, guanosine, cytidine, thymidine, inosine and xanthosine as substrates. Also catalyzes the reverse reactions. The polypeptide is Pyrimidine/purine nucleoside phosphorylase (Laribacter hongkongensis (strain HLHK9)).